Consider the following 87-residue polypeptide: Small ribosomal subunit protein uS17 (87 aa).

The protein belongs to the universal ribosomal protein uS17 family. Part of the 30S ribosomal subunit.

Its function is as follows. One of the primary rRNA binding proteins, it binds specifically to the 5'-end of 16S ribosomal RNA. The chain is Small ribosomal subunit protein uS17 from Dichelobacter nodosus (strain VCS1703A).